Reading from the N-terminus, the 590-residue chain is Beta-fructofuranosidase, insoluble isoenzyme 4 (590 aa).

An N-terminal signal peptide occupies residues 1-28 (MVMAPIPQPWHQWPFLILFFLVLFSCES). Substrate is bound by residues 71-74 (WIND) and Q90. Residue D74 is part of the active site. N-linked (GlcNAc...) asparagine glycosylation is present at N94. Residues W98 and 133–134 (WT) each bind substrate. N-linked (GlcNAc...) asparagine glycosylation occurs at N167. 198-199 (RD) is a binding site for substrate. An N-linked (GlcNAc...) asparagine glycan is attached at N247. Substrate is bound by residues E253 and D287. The N-linked (GlcNAc...) asparagine glycan is linked to N345. The cysteines at positions 445 and 491 are disulfide-linked. Residue N565 is glycosylated (N-linked (GlcNAc...) asparagine).

Belongs to the glycosyl hydrolase 32 family. As to expression, expressed in leaves. Expressed at moderate levels in roots and flowers, and weakly in seeds.

The protein localises to the secreted. Its subcellular location is the extracellular space. It is found in the apoplast. The protein resides in the cell wall. The enzyme catalyses Hydrolysis of terminal non-reducing beta-D-fructofuranoside residues in beta-D-fructofuranosides.. Its function is as follows. May play a role in sucrose partitioning during seed development and in stress response. This Oryza sativa subsp. japonica (Rice) protein is Beta-fructofuranosidase, insoluble isoenzyme 4 (CIN4).